The sequence spans 247 residues: Aspartate/glutamate leucyltransferase (247 aa).

This sequence belongs to the R-transferase family. Bpt subfamily.

The protein resides in the cytoplasm. It carries out the reaction N-terminal L-glutamyl-[protein] + L-leucyl-tRNA(Leu) = N-terminal L-leucyl-L-glutamyl-[protein] + tRNA(Leu) + H(+). The catalysed reaction is N-terminal L-aspartyl-[protein] + L-leucyl-tRNA(Leu) = N-terminal L-leucyl-L-aspartyl-[protein] + tRNA(Leu) + H(+). In terms of biological role, functions in the N-end rule pathway of protein degradation where it conjugates Leu from its aminoacyl-tRNA to the N-termini of proteins containing an N-terminal aspartate or glutamate. The polypeptide is Aspartate/glutamate leucyltransferase (Dechloromonas aromatica (strain RCB)).